The following is a 561-amino-acid chain: Interleukin-1 receptor-like 2 (561 aa).

Positions 1–21 are cleaved as a signal peptide; sequence MGMPPLLFCWVSFVLPLFVAA. 3 Ig-like C2-type domains span residues 22–113, 128–215, and 225–321; these read GNCT…INLT, SINS…VRNY, and SGGR…TCHA. Residues 22–338 are Extracellular-facing; sequence GNCTDVYMHH…ILKRPAPDFR (317 aa). N-linked (GlcNAc...) asparagine glycosylation is found at asparagine 23, asparagine 43, asparagine 55, asparagine 111, and asparagine 130. The cysteines at positions 44 and 97 are disulfide-linked. Cysteine 149 and cysteine 199 are disulfide-bonded. Residues asparagine 231, asparagine 237, asparagine 253, asparagine 269, asparagine 290, and asparagine 302 are each glycosylated (N-linked (GlcNAc...) asparagine). A disulfide bridge links cysteine 252 with cysteine 319. The chain crosses the membrane as a helical span at residues 339 to 358; the sequence is AYLIGGLMAFLLLAVSILYI. Residues 359–561 lie on the Cytoplasmic side of the membrane; that stretch reads YNTFKVDIVL…LLGHTPRIPG (203 aa). The 156-residue stretch at 384–539 folds into the TIR domain; sequence KLYDAYVLYP…KFWKKVRYHM (156 aa). The active site involves glutamate 470.

Belongs to the interleukin-1 receptor family. As to quaternary structure, interacts with IL1RAP; the association is enhanced by IL36B indicative for an functional signaling complex and inhibited by IL36RN. As to expression, predominant expression in the lung and epididymis, with lower expression in cerebral cortex and testis. Expression in the brain is non-neuronal and associated with the cerebral vasculature. Not detected in any cell line tested.

The protein localises to the membrane. The catalysed reaction is NAD(+) + H2O = ADP-D-ribose + nicotinamide + H(+). Receptor for interleukin-36 (IL36A, IL36B and IL36G). After binding to interleukin-36 associates with the coreceptor IL1RAP to form the interleukin-36 receptor complex which mediates interleukin-36-dependent activation of NF-kappa-B, MAPK and other pathways. The IL-36 signaling system is thought to be present in epithelial barriers and to take part in local inflammatory response; it is similar to the IL-1 system. Seems to be involved in skin inflammatory response by induction of the IL-23/IL-17/IL-22 pathway. Receptor for the interleukin IL36G. Binding to the agonist leads to the activation of NF-kappa-B. This chain is Interleukin-1 receptor-like 2 (Il1rl2), found in Rattus norvegicus (Rat).